The chain runs to 304 residues: Aspartate carbamoyltransferase catalytic subunit (304 aa).

2 residues coordinate carbamoyl phosphate: Arg-54 and Thr-55. Residue Lys-83 participates in L-aspartate binding. Carbamoyl phosphate-binding residues include Arg-104, His-132, and Gln-135. Positions 165 and 226 each coordinate L-aspartate. The carbamoyl phosphate site is built by Leu-265 and Pro-266.

This sequence belongs to the aspartate/ornithine carbamoyltransferase superfamily. ATCase family. In terms of assembly, heterooligomer of catalytic and regulatory chains.

The enzyme catalyses carbamoyl phosphate + L-aspartate = N-carbamoyl-L-aspartate + phosphate + H(+). It participates in pyrimidine metabolism; UMP biosynthesis via de novo pathway; (S)-dihydroorotate from bicarbonate: step 2/3. Its function is as follows. Catalyzes the condensation of carbamoyl phosphate and aspartate to form carbamoyl aspartate and inorganic phosphate, the committed step in the de novo pyrimidine nucleotide biosynthesis pathway. In Pyrobaculum neutrophilum (strain DSM 2338 / JCM 9278 / NBRC 100436 / V24Sta) (Thermoproteus neutrophilus), this protein is Aspartate carbamoyltransferase catalytic subunit.